Reading from the N-terminus, the 307-residue chain is Acetyl-coenzyme A carboxylase carboxyl transferase subunit beta (307 aa).

The 270-residue stretch at 25 to 294 folds into the CoA carboxyltransferase N-terminal domain; that stretch reads VWTKCTSCEQ…PLVVPIEQPK (270 aa). The Zn(2+) site is built by Cys29, Cys32, Cys48, and Cys51. Residues 29 to 51 form a C4-type zinc finger; that stretch reads CTSCEQVLYHADLERNLEVCPKC.

Belongs to the AccD/PCCB family. Acetyl-CoA carboxylase is a heterohexamer composed of biotin carboxyl carrier protein (AccB), biotin carboxylase (AccC) and two subunits each of ACCase subunit alpha (AccA) and ACCase subunit beta (AccD). Zn(2+) serves as cofactor.

It localises to the cytoplasm. It catalyses the reaction N(6)-carboxybiotinyl-L-lysyl-[protein] + acetyl-CoA = N(6)-biotinyl-L-lysyl-[protein] + malonyl-CoA. It participates in lipid metabolism; malonyl-CoA biosynthesis; malonyl-CoA from acetyl-CoA: step 1/1. Component of the acetyl coenzyme A carboxylase (ACC) complex. Biotin carboxylase (BC) catalyzes the carboxylation of biotin on its carrier protein (BCCP) and then the CO(2) group is transferred by the transcarboxylase to acetyl-CoA to form malonyl-CoA. The chain is Acetyl-coenzyme A carboxylase carboxyl transferase subunit beta from Photobacterium profundum (strain SS9).